A 216-amino-acid chain; its full sequence is Deoxyribose-phosphate aldolase (216 aa).

Asp89 serves as the catalytic Proton donor/acceptor. The active-site Schiff-base intermediate with acetaldehyde is Lys152. Lys181 (proton donor/acceptor) is an active-site residue.

This sequence belongs to the DeoC/FbaB aldolase family. DeoC type 1 subfamily.

The protein localises to the cytoplasm. The enzyme catalyses 2-deoxy-D-ribose 5-phosphate = D-glyceraldehyde 3-phosphate + acetaldehyde. It functions in the pathway carbohydrate degradation; 2-deoxy-D-ribose 1-phosphate degradation; D-glyceraldehyde 3-phosphate and acetaldehyde from 2-deoxy-alpha-D-ribose 1-phosphate: step 2/2. Functionally, catalyzes a reversible aldol reaction between acetaldehyde and D-glyceraldehyde 3-phosphate to generate 2-deoxy-D-ribose 5-phosphate. In Clostridium tetani (strain Massachusetts / E88), this protein is Deoxyribose-phosphate aldolase.